A 283-amino-acid chain; its full sequence is Phosphatidylserine decarboxylase proenzyme (283 aa).

Residues Asp-88, His-145, and Ser-248 each act as charge relay system; for autoendoproteolytic cleavage activity in the active site. Residue Ser-248 is the Schiff-base intermediate with substrate; via pyruvic acid; for decarboxylase activity of the active site. A Pyruvic acid (Ser); by autocatalysis modification is found at Ser-248.

This sequence belongs to the phosphatidylserine decarboxylase family. PSD-B subfamily. Prokaryotic type I sub-subfamily. In terms of assembly, heterodimer of a large membrane-associated beta subunit and a small pyruvoyl-containing alpha subunit. Pyruvate is required as a cofactor. In terms of processing, is synthesized initially as an inactive proenzyme. Formation of the active enzyme involves a self-maturation process in which the active site pyruvoyl group is generated from an internal serine residue via an autocatalytic post-translational modification. Two non-identical subunits are generated from the proenzyme in this reaction, and the pyruvate is formed at the N-terminus of the alpha chain, which is derived from the carboxyl end of the proenzyme. The autoendoproteolytic cleavage occurs by a canonical serine protease mechanism, in which the side chain hydroxyl group of the serine supplies its oxygen atom to form the C-terminus of the beta chain, while the remainder of the serine residue undergoes an oxidative deamination to produce ammonia and the pyruvoyl prosthetic group on the alpha chain. During this reaction, the Ser that is part of the protease active site of the proenzyme becomes the pyruvoyl prosthetic group, which constitutes an essential element of the active site of the mature decarboxylase.

The protein resides in the cell membrane. It carries out the reaction a 1,2-diacyl-sn-glycero-3-phospho-L-serine + H(+) = a 1,2-diacyl-sn-glycero-3-phosphoethanolamine + CO2. Its pathway is phospholipid metabolism; phosphatidylethanolamine biosynthesis; phosphatidylethanolamine from CDP-diacylglycerol: step 2/2. In terms of biological role, catalyzes the formation of phosphatidylethanolamine (PtdEtn) from phosphatidylserine (PtdSer). This chain is Phosphatidylserine decarboxylase proenzyme, found in Methylibium petroleiphilum (strain ATCC BAA-1232 / LMG 22953 / PM1).